The sequence spans 159 residues: Ribosomal RNA large subunit methyltransferase H (159 aa).

S-adenosyl-L-methionine contacts are provided by residues L76, G108, and 127–132 (FGLLTL).

It belongs to the RNA methyltransferase RlmH family. In terms of assembly, homodimer.

Its subcellular location is the cytoplasm. It carries out the reaction pseudouridine(1915) in 23S rRNA + S-adenosyl-L-methionine = N(3)-methylpseudouridine(1915) in 23S rRNA + S-adenosyl-L-homocysteine + H(+). Its function is as follows. Specifically methylates the pseudouridine at position 1915 (m3Psi1915) in 23S rRNA. This is Ribosomal RNA large subunit methyltransferase H from Streptococcus mutans serotype c (strain ATCC 700610 / UA159).